We begin with the raw amino-acid sequence, 91 residues long: Small ribosomal subunit protein bS16 (91 aa).

The protein belongs to the bacterial ribosomal protein bS16 family.

This Exiguobacterium sp. (strain ATCC BAA-1283 / AT1b) protein is Small ribosomal subunit protein bS16.